Consider the following 440-residue polypeptide: Thymidine phosphorylase (440 aa).

The protein belongs to the thymidine/pyrimidine-nucleoside phosphorylase family. Homodimer.

It catalyses the reaction thymidine + phosphate = 2-deoxy-alpha-D-ribose 1-phosphate + thymine. It functions in the pathway pyrimidine metabolism; dTMP biosynthesis via salvage pathway; dTMP from thymine: step 1/2. In terms of biological role, the enzymes which catalyze the reversible phosphorolysis of pyrimidine nucleosides are involved in the degradation of these compounds and in their utilization as carbon and energy sources, or in the rescue of pyrimidine bases for nucleotide synthesis. The chain is Thymidine phosphorylase from Salmonella paratyphi A (strain ATCC 9150 / SARB42).